The following is a 742-amino-acid chain: Zinc finger protein 280C (742 aa).

Glycyl lysine isopeptide (Lys-Gly) (interchain with G-Cter in SUMO2) cross-links involve residues lysine 10, lysine 23, lysine 42, lysine 65, lysine 85, lysine 123, and lysine 135. Over residues 138 to 168 (FTKTSPQEDSGACSVSQSDSTQDIPSSNILQ) the composition is skewed to polar residues. The disordered stretch occupies residues 138–243 (FTKTSPQEDS…QSAPGSSSLR (106 aa)). Residues lysine 180, lysine 186, and lysine 193 each participate in a glycyl lysine isopeptide (Lys-Gly) (interchain with G-Cter in SUMO2) cross-link. Residues 182–191 (PSTSKVNSVN) show a composition bias toward polar residues. Low complexity predominate over residues 200-222 (SISETRPCSSSSSQTAPSGASSQ). Over residues 223–243 (TVLSNVNTSSVQSAPGSSSLR) the composition is skewed to polar residues. 5 consecutive C2H2-type zinc fingers follow at residues 323-345 (FKCFSCTKVLKNNIRFMNHMKHH), 360-383 (TTCQHCYRQYPNPFQLQCHIESTH), 390-413 (TICKICELSFETEHMLLQHMKDTH), 420-443 (YICQVCQFRSSIFSDVETHFRSSH), and 477-499 (YRCPKCRLQFLTSKEKTEHKLEH). Low complexity predominate over residues 523-578 (LGSSQSRASSPPSSTIPSTSLQLSVPKSKSTTTKNNSKVSANKATTTSPQTVATTT). The disordered stretch occupies residues 523-608 (LGSSQSRASS…YKQKRQRTRK (86 aa)). Polar residues predominate over residues 579-592 (GKPSASKPGTGTTK). A Glycyl lysine isopeptide (Lys-Gly) (interchain with G-Cter in SUMO2) cross-link involves residue lysine 580. Basic residues predominate over residues 593–608 (SKAKPSYKQKRQRTRK).

The protein localises to the nucleus. Functionally, may function as a transcription factor. The chain is Zinc finger protein 280C (Znf280c) from Mus musculus (Mouse).